Consider the following 221-residue polypeptide: 7-cyano-7-deazaguanine synthase (221 aa).

Position 10 to 20 (10 to 20 (LSGGLDSTTCM)) interacts with ATP. Cys188, Cys196, Cys199, and Cys202 together coordinate Zn(2+).

Belongs to the QueC family. As to quaternary structure, homodimer. It depends on Zn(2+) as a cofactor.

The enzyme catalyses 7-carboxy-7-deazaguanine + NH4(+) + ATP = 7-cyano-7-deazaguanine + ADP + phosphate + H2O + H(+). It functions in the pathway purine metabolism; 7-cyano-7-deazaguanine biosynthesis. In terms of biological role, catalyzes the ATP-dependent conversion of 7-carboxy-7-deazaguanine (CDG) to 7-cyano-7-deazaguanine (preQ(0)). The sequence is that of 7-cyano-7-deazaguanine synthase from Oceanobacillus iheyensis (strain DSM 14371 / CIP 107618 / JCM 11309 / KCTC 3954 / HTE831).